The primary structure comprises 652 residues: Nitrate reductase-like protein NarX (652 aa).

The tract at residues 1 to 251 (MTVTPRTGSR…FGDQTDVPES (251 aa)) is nitrate reductase alpha subunit. A 4Fe-4S Mo/W bis-MGD-type domain is found at 53–117 (DKVVRSTHGV…AFSWYTYSPT (65 aa)). His60, Cys64, Cys68, and Cys103 together coordinate [4Fe-4S] cluster. Asp233 contributes to the Mo-bis(molybdopterin guanine dinucleotide) binding site. Positions 258–415 (VWQCASVLLT…TVAAVCRTGD (158 aa)) are nitrate reductase delta subunit. Helical transmembrane passes span 416 to 436 (MMGE…VAVG), 466 to 486 (PMFH…LVIP), 504 to 524 (AVVL…LLIY), 545 to 565 (LVLV…SGVV), and 595 to 615 (APLY…LWPF). The tract at residues 416 to 652 (MMGELFWTVV…VLTRPRRRGW (237 aa)) is nitrate reductase gamma subunit. Heme b contacts are provided by His469 and His479. Residues His602 and His620 each contribute to the heme b site.

The protein in the N-terminal section; belongs to the nitrate reductase alpha subunit family. It in the central section; belongs to the NarJ/NarW family. In the C-terminal section; belongs to the nitrate reductase gamma subunit family. [4Fe-4S] cluster is required as a cofactor. Requires Mo-bis(molybdopterin guanine dinucleotide) as cofactor. It depends on heme b as a cofactor.

The protein localises to the cell membrane. Functionally, does not seem to have nitrate reductase activity. The protein is Nitrate reductase-like protein NarX (narX) of Mycobacterium tuberculosis (strain CDC 1551 / Oshkosh).